We begin with the raw amino-acid sequence, 343 residues long: uncharacterized protein (343 aa).

This is an uncharacterized protein from Saccharolobus islandicus (Sulfolobus islandicus).